Here is a 1161-residue protein sequence, read N- to C-terminus: Lysine-specific demethylase 2A (1161 aa).

A Phosphoserine modification is found at serine 28. Residues 148–316 (FSHTRLENMV…MQLKIYSIED (169 aa)) form the JmjC domain. Threonine 209 contributes to the substrate binding site. Fe cation contacts are provided by histidine 212 and aspartate 214. Lysine 229 contributes to the substrate binding site. Histidine 284 is a Fe cation binding site. Serine 390 and serine 394 each carry phosphoserine. Residues 419–433 (KTLSGDSSSDSTRGS) are compositionally biased toward low complexity. A disordered region spans residues 419–445 (KTLSGDSSSDSTRGSHNGQVWDPQCSP). Serine 444 bears the Phosphoserine mark. Lysine 505 is covalently cross-linked (Glycyl lysine isopeptide (Lys-Gly) (interchain with G-Cter in SUMO2)). The segment at 532-557 (VPTIPITKPHTMKPAPRLTPVRPAAA) is disordered. Threonine 550 is modified (phosphothreonine). Serine 558 is subject to Phosphoserine. The segment at 564 to 610 (ARRRRVRCRKCKACVQGECGVCHYCRDMKKFGGPGRMKQSCVLRQCL) adopts a CXXC-type zinc-finger fold. Cysteine 571, cysteine 574, cysteine 577, cysteine 582, cysteine 585, cysteine 588, cysteine 604, cysteine 609, cysteine 620, and cysteine 623 together coordinate Zn(2+). The PHD-type zinc-finger motif lies at 617 to 678 (SVTCSLCGEV…CWECPKCYQE (62 aa)). Position 632 is a phosphothreonine (threonine 632). Positions 642, 645, 650, 653, 672, and 675 each coordinate Zn(2+). At serine 692 the chain carries Phosphoserine. The interval 705-789 (LRSCEEPLTP…PSGKKELSEV (85 aa)) is disordered. Threonine 713 carries the post-translational modification Phosphothreonine. 2 positions are modified to phosphoserine: serine 718 and serine 731. Composition is skewed to basic and acidic residues over residues 746 to 757 (SDHHSASRDERF) and 771 to 789 (TMVR…LSEV). Phosphoserine occurs at positions 825, 868, and 882. The tract at residues 840 to 886 (CPARNPQHGDEEGLGGEEEEEEEEEEDDSAEEGGAARLNGRGSWAQD) is disordered. Over residues 851 to 870 (EGLGGEEEEEEEEEEDDSAE) the composition is skewed to acidic residues. Residues 888–935 (DESWMQREVWMSVFRYLSRKELCECMRVCKTWYKWCCDKRLWTKIDLS) enclose the F-box domain. LRR repeat units follow at residues 960-981 (WTNI…LKDL) and 983-1009 (LAGC…DLRW). The residue at position 1019 (arginine 1019) is an ADP-ribosylarginine. LRR repeat units lie at residues 1047-1072 (GLDI…DLSH), 1073-1102 (CSHL…NMAG), 1103-1127 (CNKL…DLRG), and 1128-1155 (CKQI…SDEK).

This sequence belongs to the JHDM1 histone demethylase family. In terms of assembly, part of a SCF (SKP1-cullin-F-box) protein ligase complex. Interacts with CBX5/HP1A; the interaction promotes CBX5 localization to chromatin. The SKP1-KDM2A complex interacts with UBB. Fe(2+) is required as a cofactor. Mono-ADP-ribosylated at Arg-1019 in response to DNA damage, leading to displacement from chromatin, resulting in increased dimethylation of histone H3 at 'Lys-36'.

The protein localises to the nucleus. The protein resides in the nucleoplasm. It localises to the chromosome. The enzyme catalyses N(6),N(6)-dimethyl-L-lysyl(36)-[histone H3] + 2 2-oxoglutarate + 2 O2 = L-lysyl(36)-[histone H3] + 2 formaldehyde + 2 succinate + 2 CO2. In terms of biological role, histone demethylase that specifically demethylates 'Lys-36' of histone H3, thereby playing a central role in histone code. Preferentially demethylates dimethylated H3 'Lys-36' residue while it has weak or no activity for mono- and tri-methylated H3 'Lys-36'. May also recognize and bind to some phosphorylated proteins and promote their ubiquitination and degradation. Required to maintain the heterochromatic state. Associates with centromeres and represses transcription of small non-coding RNAs that are encoded by the clusters of satellite repeats at the centromere. Required to sustain centromeric integrity and genomic stability, particularly during mitosis. Regulates circadian gene expression by repressing the transcriptional activator activity of CLOCK-BMAL1 heterodimer and RORA in a catalytically-independent manner. In Mus musculus (Mouse), this protein is Lysine-specific demethylase 2A (Kdm2a).